A 425-amino-acid chain; its full sequence is Proteinase-activated receptor 1 (425 aa).

The signal sequence occupies residues 1–21; sequence MGPRRLLLVAACLCLCGPLLS. The propeptide at 22-41 is removed for receptor activation; that stretch reads ARTRARRPASKATNATLDPR. Residues Asn35, Asn62, and Asn75 are each glycosylated (N-linked (GlcNAc...) asparagine). Residues 42 to 102 are Extracellular-facing; sequence SFLLRNPNDK…SGYLTSSWLT (61 aa). Residues 103-128 form a helical membrane-spanning segment; that stretch reads LFVPSVYTGVFVVSLPVNIMAIVVFI. At 129–137 the chain is on the cytoplasmic side; that stretch reads LKMKVKKPA. A helical transmembrane segment spans residues 138-157; the sequence is VVYMLHLATADVLFVSVLPF. Residues 158–176 are Extracellular-facing; that stretch reads KISYYLSGSDWQFGSELCR. An intrachain disulfide couples Cys175 to Cys254. The helical transmembrane segment at 177–198 threads the bilayer; it reads FVTAAFYCNMYASILLMTVISI. The Cytoplasmic portion of the chain corresponds to 199–218; the sequence is DRFLAVVYPMQSLSWRTLGR. Residues 219–239 traverse the membrane as a helical segment; the sequence is ASFTCLAIWALAIAGVVPLLL. At 240–268 the chain is on the extracellular side; sequence KEQTIQVPGLNITTCHDVLNETLLEGYYA. N-linked (GlcNAc...) asparagine glycans are attached at residues Asn250 and Asn259. A helical transmembrane segment spans residues 269 to 288; the sequence is YYFSAFSAVFFFVPLIISTV. Residues 289–311 lie on the Cytoplasmic side of the membrane; the sequence is CYVSIIRCLSSSTVANRSKKSRA. A helical membrane pass occupies residues 312 to 334; the sequence is LFLSAAVFCIFIICFGPTNILLI. Residues 335-350 lie on the Extracellular side of the membrane; that stretch reads AHYSFLSHTSTTEAAY. Residues 351 to 374 traverse the membrane as a helical segment; the sequence is FAYLLCVCVSSISCCIDPLIYYYA. Over 375 to 425 the chain is Cytoplasmic; it reads SSECQRYVYSILCCKESSDPSSSNSSGQLMASKMDTCSSNLNNSIYKKLLT. Residue Ser418 is modified to Phosphoserine.

This sequence belongs to the G-protein coupled receptor 1 family. Post-translationally, proteolytic cleavage by thrombin generates a new N-terminus that functions as a tethered ligand. Also proteolytically cleaved by cathepsin CTSG. Cleavage at 41-Arg-|-Ser-42 by CTSG results in receptor activation while cleavage at 55-Phe-|-Trp-56 results in inhibition of receptor activation. Phosphorylated in the C-terminal tail; probably mediating desensitization prior to the uncoupling and internalization of the receptor.

It localises to the cell membrane. In terms of biological role, high affinity receptor that binds the activated thrombin, leading to calcium release from intracellular stores. The thrombin-activated receptor signaling pathway is mediated through PTX-insensitive G proteins, activation of phospholipase C resulting in the production of 1D-myo-inositol 1,4,5-trisphosphate (InsP3) which binds to InsP3 receptors causing calcium release from the stores. In astrocytes, the calcium released into the cytosol allows the Ca(2+)-dependent release of L-glutamate into the synaptic cleft through BEST1, that targets the neuronal postsynaptic GRIN2A/NMDAR receptor resulting in the synaptic plasticity regulation. May play a role in platelets activation and in vascular development. Mediates up-regulation of pro-inflammatory cytokines, such as MCP-1/CCL2 and IL6, triggered by coagulation factor Xa (F10) in cardiac fibroblasts and umbilical vein endothelial cells. This is Proteinase-activated receptor 1 from Papio hamadryas (Hamadryas baboon).